We begin with the raw amino-acid sequence, 123 residues long: Large ribosomal subunit protein bL12 (123 aa).

At Lys-84 the chain carries N6-methyllysine. Positions 94–123 (PATLKEGMSKEDGDEAKTKLEEAGASVELK) are disordered. Basic and acidic residues predominate over residues 100–115 (GMSKEDGDEAKTKLEE).

This sequence belongs to the bacterial ribosomal protein bL12 family. Homodimer. Part of the ribosomal stalk of the 50S ribosomal subunit. Forms a multimeric L10(L12)X complex, where L10 forms an elongated spine to which 2 to 4 L12 dimers bind in a sequential fashion. Binds GTP-bound translation factors.

Functionally, seems to be the binding site for several of the factors involved in protein synthesis and appears to be essential for accurate translation. Forms part of the ribosomal stalk which helps the ribosome interact with GTP-bound translation factors. Is thus essential for accurate translation. In Halophilic eubacterium NRCC 41227, this protein is Large ribosomal subunit protein bL12.